The following is a 219-amino-acid chain: MASVTDGNTGIRDASDQNFDYMFKLLIIGNSSVGKTSFLFRYADDTFTPAFVSTVGIDFKVKTVYRHEKRVKLQIWDTAGQERYRTITTAYYRGAMGFILMYDITNEESFNAVQDWATQIKTYSWDNAQVILVGNKCDMEEERVIPTEKGRLLAEQLGFDFFEASAKENISVRQAFERLVDAICDKMSDSMDTDPSVLGASKTTRLSDTPPLLQQNCSC.

An N-acetylalanine modification is found at Ala2. Positions 31, 32, 33, 34, 35, 36, 37, 49, and 53 each coordinate GTP. Thr36 is a Mg(2+) binding site. Residues 45 to 58 (DTFTPAFVSTVGID) carry the Switch 1 motif. Residues Thr54 and Asp77 each coordinate Mg(2+). The Switch 2 motif lies at 78-96 (TAGQERYRTITTAYYRGAM). Residue Gly80 coordinates GTP. Thr86 bears the Phosphothreonine mark. Residues Asn135, Lys136, Asp138, Ala166, and Lys167 each contribute to the GTP site. Residues Ser188 and Ser190 each carry the phosphoserine modification. S-geranylgeranyl cysteine attachment occurs at residues Cys217 and Cys219. A Cysteine methyl ester modification is found at Cys219.

Belongs to the small GTPase superfamily. Rab family. Interacts with RPH3A and RPH3AL. Interacts with RIMS1. Interacts with RIMS2. The GTP-bound form interacts with GAS8/DRC4 (via coiled-coil domains). Interacts with GDI2, and CHM; phosphorylation at Thr-86 disrupts these interactions. Interacts with MADD (via uDENN domain); the GTP-bound form is preferred for interaction. It depends on Mg(2+) as a cofactor. Post-translationally, phosphorylation of Thr-86 in the switch II region by LRRK2 prevents the association of RAB regulatory proteins, including CHM and RAB GDP dissociation inhibitor GDI2.

The protein resides in the cell membrane. Its subcellular location is the golgi apparatus. It catalyses the reaction GTP + H2O = GDP + phosphate + H(+). Its activity is regulated as follows. Regulated by guanine nucleotide exchange factors (GEFs) which promote the exchange of bound GDP for free GTP. Regulated by GTPase activating proteins (GAPs) which increase the GTP hydrolysis activity. Inhibited by GDP dissociation inhibitors (GDIs) which prevent Rab-GDP dissociation. Its function is as follows. The small GTPases Rab are key regulators of intracellular membrane trafficking, from the formation of transport vesicles to their fusion with membranes. Rabs cycle between an inactive GDP-bound form and an active GTP-bound form that is able to recruit to membranes different sets of downstream effectors directly responsible for vesicle formation, movement, tethering and fusion. The polypeptide is Ras-related protein Rab-3B (Rattus norvegicus (Rat)).